We begin with the raw amino-acid sequence, 644 residues long: Transmembrane 9 superfamily member 9 (644 aa).

The signal sequence occupies residues 1–27 (MEFYRSSRRLQILGSVILLLSIHVAHS). At 28–281 (FYLPGVAPQD…YLLMSDNQIH (254 aa)) the chain is on the lumenal side. The helical transmembrane segment at 282–302 (WFSIVNSLMIVLFLSGMVAMI) threads the bilayer. Residues 303 to 351 (MLRTLYRDISRYNELETQEEAQEETGWKLVHGDVFRPPANSDLLCVYVG) are Cytoplasmic-facing. A helical membrane pass occupies residues 352 to 372 (TGVQCLGMVLVTMIFAMLGFL). The Lumenal portion of the chain corresponds to 373-377 (SPSNR). The helical transmembrane segment at 378 to 398 (GGLMTAMLLLWVFMGLFAGYA) threads the bilayer. Topologically, residues 399 to 418 (SSRLYKMFKGTEWKRIAFRT) are cytoplasmic. The helical transmembrane segment at 419–439 (AFLFPAVVSAIFFVLNALIWG) threads the bilayer. At 440–451 (QKSSGAVPFGTM) the chain is on the lumenal side. The helical transmembrane segment at 452–472 (FALIFLWFGISVPLVFVGAYL) threads the bilayer. Over 473–501 (GFKKPPLDDPVKTNKIPRQIPEQAWYMNP) the chain is Cytoplasmic. A helical membrane pass occupies residues 502–522 (IFSILIGGILPFGAVFIELFF). Topologically, residues 523 to 534 (ILTSIWLNQFYY) are lumenal. The chain crosses the membrane as a helical span at residues 535 to 555 (IFGFLFLVFVILMVTCAEITI). The Cytoplasmic portion of the chain corresponds to 556–573 (VLCYFQLCSEDYLWWWRS). The helical transmembrane segment at 574-594 (YLTSGSSAVYLFLYAAFYFFT) threads the bilayer. The Lumenal segment spans residues 595–600 (KLQITK). Residues 601–621 (LVSAMLYFGYMLIASYAFFVL) traverse the membrane as a helical segment. Residues 622 to 644 (TGTIGFYACLWFTRLIYSSVKID) are Cytoplasmic-facing. Positions 633–638 (FTRLIY) match the Endoplasmic reticulum export signal motif. Residues 642 to 644 (KID) carry the Golgi retention signal motif.

This sequence belongs to the nonaspanin (TM9SF) (TC 9.A.2) family.

Its subcellular location is the endosome membrane. The protein localises to the golgi apparatus membrane. The chain is Transmembrane 9 superfamily member 9 from Arabidopsis thaliana (Mouse-ear cress).